The following is a 243-amino-acid chain: 7-cyano-7-deazaguanine synthase (243 aa).

An ATP-binding site is contributed by 18 to 28; sequence FSGGQDSATCL. 4 residues coordinate Zn(2+): Cys206, Cys221, Cys224, and Cys227.

This sequence belongs to the QueC family. Zn(2+) is required as a cofactor.

It catalyses the reaction 7-carboxy-7-deazaguanine + NH4(+) + ATP = 7-cyano-7-deazaguanine + ADP + phosphate + H2O + H(+). It functions in the pathway purine metabolism; 7-cyano-7-deazaguanine biosynthesis. In terms of biological role, catalyzes the ATP-dependent conversion of 7-carboxy-7-deazaguanine (CDG) to 7-cyano-7-deazaguanine (preQ(0)). The sequence is that of 7-cyano-7-deazaguanine synthase from Maricaulis maris (strain MCS10) (Caulobacter maris).